The chain runs to 373 residues: Pulmonary surfactant-associated protein B (373 aa).

The N-terminal stretch at 1–22 is a signal peptide; the sequence is MAKSHLLPWLLLLPILCGPGTA. Positions 23–187 are excised as a propeptide; the sequence is AAITYSLACA…PQTQDLSEQL (165 aa). The Saposin A-type domain occupies 24–64; the sequence is AITYSLACAQGPEFWCQSLEQALQCRALGHCLQEVWGHVEA. Saposin B-type domains lie at 64-146, 191-268, and 287-362; these read ADDL…KPRH, PIPY…SSED, and QDSD…AAPF. 9 cysteine pairs are disulfide-bonded: Cys68–Cys142, Cys71–Cys136, Cys99–Cys111, Cys195–Cys264, Cys198–Cys258, Cys222–Cys233, Cys291–Cys358, Cys294–Cys352, and Cys317–Cys327. An N-linked (GlcNAc...) asparagine glycan is attached at Asn73. Residues 267 to 373 constitute a propeptide that is removed on maturation; sequence EDSAGPALPA…PLQCVHSPHF (107 aa). Asn303 carries an N-linked (GlcNAc...) asparagine glycan.

Homodimer; disulfide-linked.

Its subcellular location is the secreted. It is found in the extracellular space. It localises to the surface film. In terms of biological role, pulmonary surfactant-associated proteins promote alveolar stability by lowering the surface tension at the air-liquid interface in the peripheral air spaces. SP-B increases the collapse pressure of palmitic acid to nearly 70 millinewtons per meter. The sequence is that of Pulmonary surfactant-associated protein B (SFTPB) from Bos taurus (Bovine).